A 932-amino-acid chain; its full sequence is MQTATKPLVGARAVPLSRRASFLVAEARRKPSTNARRTRVGSTSTTTTTTTILTDVNGPALTTVAKPGHQYDLKQTVEMKATVSVHMKSFWWSDEKKERARDWAYDLILGSWLTLELVSSELDPKTGQEHDVISGKLKHSRETEKDYDLYEAIFTCRHRLAPSGAVRLVNYHHTEMLLGEVKIFPAGEDPTKSSAVTLFHCQSWIDPSHCSPDKRTFFPVEKSYIPSQTPKGVEKLRKSELEALRGNGCGERKKHDRIYDYDVYNDLGKPESKRPVLGGKEHPYPRRCRTGRPRSKTDPSSEEESHKKGEMYVPRDETFTERKEQAFLTKQLLSQLHGLCTGLKVNKDILPSFPTLASIDALYDDDFRNQPVQPEGGKVRLILDLLAKELVHLVKLEGAEFVEGIRRVFKFETPEIHDMDKLAWFRDEEFARQTLAGMNPLSIQLVTELPIVSKLDELKYGPADSLITKELIEKQINRIMTAEEAVAQKKLFMLDYHDLLLPYVHRVRKLDNKTMYGSRTLFFLADDGTLRPIAIELTRPKSPHKQQWRKVFTPGSGYSGSVTGSWEWQLAKIHVLSHDTGYHQLVSHWLRTHCCVEPYVIAANRQLSQMHPIYRLLHPHFRFTMEINAQARGMLICADGIIEKTFSPGEFSMEISSAAYDKQWRFDMEALPEDLIRRGMAVRGEDGKLELAIEDYPYANDGLLVWDAIKQWASDYVAHYYPCAVDIVDDEELQDWWTEVRTKGHPDKQDEPWWPELDCHESLVQVLATIMWVTSAHHAAVNFGQYPMAGYVPNHPSIARRNMPCEMGPEEMLAFKAAPEKVWLDTLPSQLQTVMVMATLDLLSSHASDEEYMGTHQEPAWQRDGEVDKAFQVFQKKMRDIAEQVEEWNKDDSRRNRHGAGVVPYVLLRPLNGNPMDAKTVMEMGIPNSISI.

The PLAT domain occupies 79–219; it reads MKATVSVHMK…CSPDKRTFFP (141 aa). Residues 223–932 form the Lipoxygenase domain; sequence SYIPSQTPKG…EMGIPNSISI (710 aa). A compositionally biased stretch (basic and acidic residues) spans 270 to 284; it reads PESKRPVLGGKEHPY. The segment at 270 to 311 is disordered; that stretch reads PESKRPVLGGKEHPYPRRCRTGRPRSKTDPSSEEESHKKGEM. The span at 285–294 shows a compositional bias: basic residues; the sequence is PRRCRTGRPR. Basic and acidic residues predominate over residues 295 to 311; the sequence is SKTDPSSEEESHKKGEM. Positions 588, 593, 778, 782, and 932 each coordinate Fe cation.

This sequence belongs to the lipoxygenase family. Fe cation is required as a cofactor.

It localises to the plastid. The protein localises to the chloroplast. It catalyses the reaction (9Z,12Z)-octadecadienoate + O2 = (13S)-hydroperoxy-(9Z,11E)-octadecadienoate. The catalysed reaction is (9Z,12Z,15Z)-octadecatrienoate + O2 = (13S)-hydroperoxy-(9Z,11E,15Z)-octadecatrienoate. It functions in the pathway lipid metabolism; oxylipin biosynthesis. Functionally, plant lipoxygenase may be involved in a number of diverse aspects of plant physiology including growth and development, pest resistance, and senescence or responses to wounding. This enzyme exhibits linoleate 13-lipoxygenase activity. The protein is Lipoxygenase 2.2, chloroplastic (LOX2.2) of Hordeum vulgare (Barley).